Consider the following 401-residue polypeptide: Argininosuccinate synthase (401 aa).

Position 8-16 (8-16 (AYSGGLDTT)) interacts with ATP. L-citrulline is bound at residue Y87. G117 contributes to the ATP binding site. The L-aspartate site is built by T119, N123, and D124. N123 lines the L-citrulline pocket. Residues R127, S175, E259, and Y271 each contribute to the L-citrulline site.

The protein belongs to the argininosuccinate synthase family. Type 1 subfamily. In terms of assembly, homotetramer.

Its subcellular location is the cytoplasm. It catalyses the reaction L-citrulline + L-aspartate + ATP = 2-(N(omega)-L-arginino)succinate + AMP + diphosphate + H(+). The protein operates within amino-acid biosynthesis; L-arginine biosynthesis; L-arginine from L-ornithine and carbamoyl phosphate: step 2/3. In Corynebacterium glutamicum (strain ATCC 13032 / DSM 20300 / JCM 1318 / BCRC 11384 / CCUG 27702 / LMG 3730 / NBRC 12168 / NCIMB 10025 / NRRL B-2784 / 534), this protein is Argininosuccinate synthase.